The sequence spans 601 residues: Glutathione-regulated potassium-efflux system protein KefB (601 aa).

Transmembrane regions (helical) follow at residues 5–25 (DLLL…PLAA), 29–49 (IGAV…GLGF), 55–75 (EILH…GLEL), 87–107 (IFGV…GLLM), 115–135 (AAVI…LQLM), 152–172 (VLLF…LLAG), 177–197 (HFDW…LIGG), 207–227 (FIAA…LVLG), 230–250 (LFMD…GILL), 261–281 (IAID…VGMA), 284–304 (LGVL…LVAV), 326–346 (FAGV…TAAS), and 356–376 (ALLL…MKLI). The RCK N-terminal domain maps to 400 to 518 (KPQVIVVGFG…QAGVTNFSRE (119 aa)).

The protein belongs to the monovalent cation:proton antiporter 2 (CPA2) transporter (TC 2.A.37) family. KefB subfamily. As to quaternary structure, interacts with the regulatory subunit KefG.

The protein localises to the cell inner membrane. Functionally, pore-forming subunit of a potassium efflux system that confers protection against electrophiles. Catalyzes K(+)/H(+) antiport. This Enterobacter sp. (strain 638) protein is Glutathione-regulated potassium-efflux system protein KefB.